The sequence spans 150 residues: Protein E6 (150 aa).

2 zinc fingers span residues 31–67 (CVFCRKTLSTAEVYAFQYKSLYIVWRGQFPFAACACC) and 104–140 (CYLCHKPLCEVEKLRHILQKARFIKLNSSWKGRCFHC).

This sequence belongs to the papillomaviridae E6 protein family. Forms homodimers. Interacts with ubiquitin-protein ligase UBE3A/E6-AP; this interaction stimulates UBE3A ubiquitin activity. Interacts with host TP53 and EP300; this interaction inhibits TP53 activity.

The protein localises to the host cytoplasm. Its subcellular location is the host nucleus. Plays a major role in the induction and maintenance of cellular transformation. E6 associates with host UBE3A/E6-AP ubiquitin-protein ligase and modulates its activity. Sequesters tumor suppressor TP53 in the host cytoplasm and modulates its activity by interacting with host EP300 that results in the reduction of TP53 acetylation and activation. In turn, apoptosis induced by DNA damage is inhibited. E6 also protects host keratinocytes from apoptosis by mediating the degradation of host BAK1. May also inhibit host immune response. This Human papillomavirus 13 protein is Protein E6.